We begin with the raw amino-acid sequence, 130 residues long: Small ribosomal subunit protein uS9 (130 aa).

The protein belongs to the universal ribosomal protein uS9 family.

This chain is Small ribosomal subunit protein uS9, found in Burkholderia pseudomallei (strain K96243).